A 343-amino-acid polypeptide reads, in one-letter code: Probable transposase for insertion sequence element (343 aa).

Belongs to the transposase mutator family.

Its function is as follows. Required for the transposition of the insertion element. The sequence is that of Probable transposase for insertion sequence element from Corynebacterium diphtheriae.